Here is a 325-residue protein sequence, read N- to C-terminus: Alpha-cuprenene synthase COP6 (325 aa).

5 residues coordinate Mg(2+): D102, E166, N224, S228, and E232.

It belongs to the trichodiene synthase family. Requires Mg(2+) as cofactor.

Functionally, alpha-cuprenene synthase; part of the gene cluster that mediates the biosynthesis of alpha-cuprenene and oxidized derivatives. The alpha-cuprenene synthase COP6 is the only sesquiterpene synthase identified in C.cinereus that appears to be part of a biosynthetic gene cluster and is highly specific since it catalyzes the cyclization of (2E,6E)-farnesyl diphosphate into only one product, alpha-cuprenene. COP6 is also able to perform the cyclization of geranyl diphosphate. The cytochrome P450 monooxygenase COX2 then oxidizes the cyclohexadiene ring of alpha-cuprenene at positions 1 and 4, yielding first alpha-cuparene, followed by alpha-cuparophenol and a further yet unidentified compound resulting from one additional oxidation step. The cytochrome P450 monooxygenase COX1 then likely catalyzes the oxidation at position 9 of the pentane ring of alpha-cuprenene to give the corresponding hydroxy or ketone derivatives. This is Alpha-cuprenene synthase COP6 from Coprinopsis cinerea (strain Okayama-7 / 130 / ATCC MYA-4618 / FGSC 9003) (Inky cap fungus).